Consider the following 322-residue polypeptide: Solute carrier family 35 member B1 (322 aa).

8 helical membrane passes run 12-32, 51-71, 85-105, 136-156, 168-188, 210-230, 243-263, and 285-305; these read LRLP…GILQ, FALT…KILI, WLYA…NSAL, YPMA…LFMY, TIGY…LTGV, LWST…WEFL, ILLF…TVVY, and VILF…LVFL. A Di-lysine motif motif is present at residues 318-322; the sequence is KKTSH.

This sequence belongs to the nucleotide-sugar transporter family. SLC35B subfamily.

It localises to the endoplasmic reticulum membrane. The enzyme catalyses ADP(in) + ATP(out) = ADP(out) + ATP(in). The catalysed reaction is UDP(out) + ATP(in) = UDP(in) + ATP(out). It catalyses the reaction UTP(out) + ATP(in) = UTP(in) + ATP(out). It carries out the reaction dATP(out) + ATP(in) = dATP(in) + ATP(out). ATP:ADP antiporter that catalyzes the exchange of ATP and ADP across the endoplasmic reticulum (ER) membrane. Imports ATP from the cytosol to the ER lumen and exports ADP in the opposite direction. Regulates ER energy metabolism and protein biogenesis. Appears to be part of a calcium-dependent ER to cytosol low energy response axis, where calcium efflux from ER to the cytosol triggers ATP import into the ER lumen to maintain sufficient ATP supply. Provides ATP to ER chaperone HSPA5 that drives protein folding and trafficking in the ER. Can transport dATP, UTP or UDP in exchange for ATP, but the physiological relevance of this process remains to be established. The chain is Solute carrier family 35 member B1 (SLC35B1) from Bos taurus (Bovine).